Reading from the N-terminus, the 505-residue chain is Poxin-Schlafen (505 aa).

Residues 1–238 (MAMFYAHAFG…SKEERVDYVL (238 aa)) are poxin-like. Catalysis depends on histidine 17, which acts as the Proton donor. Tyrosine 138 serves as the catalytic Shared with catalytic histidine of dimeric partner. Catalysis depends on lysine 142, which acts as the Proton acceptor; shared with catalytic histidine of dimeric partner. The segment at 239-505 (MKRLESIRHL…PDEWVSHIKF (267 aa)) is schlafen-like.

The protein in the N-terminal section; belongs to the poxin family. This sequence in the C-terminal section; belongs to the Schlafen protein family. Subgroup poxviridae B3 subfamily. In terms of assembly, homodimer.

It carries out the reaction 2',3'-cGAMP + H2O = Gp(2'-5')Ap(3') + H(+). In terms of biological role, nuclease that is responsible for viral evasion of host cGAS-STING innate immunity. Cleaves 2',3'-cGAMP which is produced by host cGAS following recognition of cytosolic DNA and blocks the subsequent 2',3'-cGAMP-mediated activation of TMEM173/STING, which normally spreads to adjacent cells and activates the interferon and NF-kappa-B immune responses. The chain is Poxin-Schlafen (OPG188) from Bos taurus (Bovine).